Here is a 123-residue protein sequence, read N- to C-terminus: Ribosome-binding factor A (123 aa).

The protein belongs to the RbfA family. Monomer. Binds 30S ribosomal subunits, but not 50S ribosomal subunits or 70S ribosomes.

Its subcellular location is the cytoplasm. Its function is as follows. One of several proteins that assist in the late maturation steps of the functional core of the 30S ribosomal subunit. Associates with free 30S ribosomal subunits (but not with 30S subunits that are part of 70S ribosomes or polysomes). Required for efficient processing of 16S rRNA. May interact with the 5'-terminal helix region of 16S rRNA. In Neisseria meningitidis serogroup B (strain ATCC BAA-335 / MC58), this protein is Ribosome-binding factor A.